The following is a 228-amino-acid chain: Sec-independent protein translocase protein TatB (228 aa).

The chain crosses the membrane as a helical span at residues 1 to 21 (MFDFGLGELVFVGIIALIVLG). Disordered regions lie at residues 126–162 (LSDG…AETD) and 196–228 (VPHT…VRKS). Residues 206–228 (AISRKRGLRPKHRAKPKLRVRKS) show a composition bias toward basic residues.

This sequence belongs to the TatB family. In terms of assembly, the Tat system comprises two distinct complexes: a TatABC complex, containing multiple copies of TatA, TatB and TatC subunits, and a separate TatA complex, containing only TatA subunits. Substrates initially bind to the TatABC complex, which probably triggers association of the separate TatA complex to form the active translocon.

Its subcellular location is the cell inner membrane. Its function is as follows. Part of the twin-arginine translocation (Tat) system that transports large folded proteins containing a characteristic twin-arginine motif in their signal peptide across membranes. Together with TatC, TatB is part of a receptor directly interacting with Tat signal peptides. TatB may form an oligomeric binding site that transiently accommodates folded Tat precursor proteins before their translocation. The protein is Sec-independent protein translocase protein TatB of Neisseria meningitidis serogroup C / serotype 2a (strain ATCC 700532 / DSM 15464 / FAM18).